The following is a 242-amino-acid chain: Type III pantothenate kinase (242 aa).

An ATP-binding site is contributed by Asp-7–Lys-14. Substrate is bound by residues Tyr-91 and Gly-98–Arg-101. The Proton acceptor role is filled by Asp-100. Thr-121 is an ATP binding site. Substrate is bound at residue Thr-171.

Belongs to the type III pantothenate kinase family. In terms of assembly, homodimer. NH4(+) is required as a cofactor. K(+) serves as cofactor.

Its subcellular location is the cytoplasm. It carries out the reaction (R)-pantothenate + ATP = (R)-4'-phosphopantothenate + ADP + H(+). It participates in cofactor biosynthesis; coenzyme A biosynthesis; CoA from (R)-pantothenate: step 1/5. Catalyzes the phosphorylation of pantothenate (Pan), the first step in CoA biosynthesis. The sequence is that of Type III pantothenate kinase from Xanthomonas oryzae pv. oryzae (strain MAFF 311018).